Reading from the N-terminus, the 457-residue chain is tRNA modification GTPase MnmE (457 aa).

(6S)-5-formyl-5,6,7,8-tetrahydrofolate contacts are provided by R25, E87, and R126. The TrmE-type G domain maps to 223 to 377; it reads GIATAIIGRP…IEEKINQLFF (155 aa). N233 contributes to the K(+) binding site. GTP-binding positions include 233 to 238, 252 to 258, and 277 to 280; these read NVGKSS, TDIAGTT, and DTAG. Mg(2+) is bound at residue S237. Positions 252, 254, and 257 each coordinate K(+). Residue T258 participates in Mg(2+) binding. Residue K457 coordinates (6S)-5-formyl-5,6,7,8-tetrahydrofolate.

The protein belongs to the TRAFAC class TrmE-Era-EngA-EngB-Septin-like GTPase superfamily. TrmE GTPase family. As to quaternary structure, homodimer. Heterotetramer of two MnmE and two MnmG subunits. It depends on K(+) as a cofactor.

The protein resides in the cytoplasm. In terms of biological role, exhibits a very high intrinsic GTPase hydrolysis rate. Involved in the addition of a carboxymethylaminomethyl (cmnm) group at the wobble position (U34) of certain tRNAs, forming tRNA-cmnm(5)s(2)U34. This chain is tRNA modification GTPase MnmE, found in Streptococcus suis (strain 98HAH33).